The following is a 361-amino-acid chain: Phospho-N-acetylmuramoyl-pentapeptide-transferase (361 aa).

10 consecutive transmembrane segments (helical) span residues 25–45, 73–93, 98–118, 139–159, 168–188, 200–220, 237–257, 264–284, 290–310, and 339–359; these read RGIL…PAVI, TMGG…WGDL, VWLV…DDWI, IFGL…AAIT, IALP…IVGF, GLAI…AYAS, AGEL…FLWF, VFMG…IAVI, VLVI…IQVV, and VIVR…ATLK.

It belongs to the glycosyltransferase 4 family. MraY subfamily. Mg(2+) serves as cofactor.

It is found in the cell inner membrane. The catalysed reaction is UDP-N-acetyl-alpha-D-muramoyl-L-alanyl-gamma-D-glutamyl-meso-2,6-diaminopimeloyl-D-alanyl-D-alanine + di-trans,octa-cis-undecaprenyl phosphate = di-trans,octa-cis-undecaprenyl diphospho-N-acetyl-alpha-D-muramoyl-L-alanyl-D-glutamyl-meso-2,6-diaminopimeloyl-D-alanyl-D-alanine + UMP. It functions in the pathway cell wall biogenesis; peptidoglycan biosynthesis. Catalyzes the initial step of the lipid cycle reactions in the biosynthesis of the cell wall peptidoglycan: transfers peptidoglycan precursor phospho-MurNAc-pentapeptide from UDP-MurNAc-pentapeptide onto the lipid carrier undecaprenyl phosphate, yielding undecaprenyl-pyrophosphoryl-MurNAc-pentapeptide, known as lipid I. The chain is Phospho-N-acetylmuramoyl-pentapeptide-transferase from Xanthomonas euvesicatoria pv. vesicatoria (strain 85-10) (Xanthomonas campestris pv. vesicatoria).